A 121-amino-acid chain; its full sequence is Large ribosomal subunit protein uL18 (121 aa).

The protein belongs to the universal ribosomal protein uL18 family. In terms of assembly, part of the 50S ribosomal subunit; part of the 5S rRNA/L5/L18/L25 subcomplex. Contacts the 5S and 23S rRNAs.

This is one of the proteins that bind and probably mediate the attachment of the 5S RNA into the large ribosomal subunit, where it forms part of the central protuberance. This Dehalococcoides mccartyi (strain ATCC BAA-2266 / KCTC 15142 / 195) (Dehalococcoides ethenogenes (strain 195)) protein is Large ribosomal subunit protein uL18.